Consider the following 438-residue polypeptide: Transposon Ty2-LR2 Gag polyprotein (438 aa).

3 stretches are compositionally biased toward polar residues: residues 1–11 (MESQQLHQNPH), 19–39 (ASVT…SASN), and 49–60 (KVNSQEETTPGT). Disordered stretches follow at residues 1–88 (MESQ…YQQH), 364–397 (KNVS…AKAH), and 418–438 (VSSQ…TERI). An RNA-binding region spans residues 295–397 (ENNINVSDRL…SSKPRAAKAH (103 aa)). Over residues 369 to 381 (TSPNTTNTKVTTR) the composition is skewed to low complexity.

As to quaternary structure, homotrimer.

The protein localises to the cytoplasm. Its function is as follows. Capsid protein (CA) is the structural component of the virus-like particle (VLP), forming the shell that encapsulates the retrotransposons dimeric RNA genome. The particles are assembled from trimer-clustered units and there are holes in the capsid shells that allow for the diffusion of macromolecules. CA also has nucleocapsid-like chaperone activity, promoting primer tRNA(i)-Met annealing to the multipartite primer-binding site (PBS), dimerization of Ty2 RNA and initiation of reverse transcription. This chain is Transposon Ty2-LR2 Gag polyprotein (TY2A-LR2), found in Saccharomyces cerevisiae (strain ATCC 204508 / S288c) (Baker's yeast).